The following is a 389-amino-acid chain: Mitochondrial carrier homolog 1 (389 aa).

The interval 1 to 78 is disordered; sequence MGASDPEVAP…PGAPGSGDNA (78 aa). Topologically, residues 1-93 are mitochondrial intermembrane; sequence MGASDPEVAP…LFVALGAGVT (93 aa). Over residues 15–33 the composition is skewed to gly residues; it reads GAAGMAGAGAGAGARGGAP. Position 29 is an omega-N-methylarginine (arginine 29). Solcar repeat units follow at residues 81–176 and 192–280; these read TEAL…FPPD and KKVV…INAY. Residues 94–104 form a helical membrane-spanning segment; that stretch reads ALSHPLLYVKL. At 105-155 the chain is on the cytoplasmic side; it reads LIQVGHEPMPPTLGTNVLGRKVLYLPSFFTYAKYIVQVDGKIGLFRGLSPR. Residues 156-176 traverse the membrane as a helical segment; the sequence is LMSNALSTVTRGSMKKVFPPD. Residues 177–209 lie on the Mitochondrial intermembrane side of the membrane; it reads EMEQVSNKDDMKTSLKKVVKETSYEMMMQCVSR. The chain crosses the membrane as a helical span at residues 210–229; the sequence is MLAHPLHVISMRCMVQFVGR. Over 230-254 the chain is Cytoplasmic; sequence EAKYSGVLSSIGKIFKEEGLLGFFV. A helical membrane pass occupies residues 255 to 279; sequence GLIPHLLGDVVFLWGCNLLAHFINA. The Mitochondrial intermembrane segment spans residues 280–322; the sequence is YLVDDSVSDTPGGLGNDQNPGSQFSQALAIRSYTKFVMGIAVS. The chain crosses the membrane as a helical span at residues 323–342; the sequence is MLTYPFLLVGDLMAVNNCGL. The Cytoplasmic segment spans residues 343–371; sequence RAGLPPYSPVFKSWIHCWKYLSVQGQLFR. A helical transmembrane segment spans residues 372 to 389; the sequence is GSSLLFRRVSSGSCFALE.

Belongs to the mitochondrial carrier (TC 2.A.29) family. In terms of assembly, interacts with PSEN1.

The protein localises to the mitochondrion outer membrane. Functionally, protein insertase that mediates insertion of transmembrane proteins into the mitochondrial outer membrane. Catalyzes insertion of proteins with alpha-helical transmembrane regions, such as signal-anchored, tail-anchored and multi-pass membrane proteins. Does not mediate insertion of beta-barrel transmembrane proteins. May play a role in apoptosis. This Mus musculus (Mouse) protein is Mitochondrial carrier homolog 1 (Mtch1).